The following is a 101-amino-acid chain: Small ribosomal subunit protein uS14 (101 aa).

It belongs to the universal ribosomal protein uS14 family. As to quaternary structure, part of the 30S ribosomal subunit. Contacts proteins S3 and S10.

Binds 16S rRNA, required for the assembly of 30S particles and may also be responsible for determining the conformation of the 16S rRNA at the A site. This Ehrlichia ruminantium (strain Welgevonden) protein is Small ribosomal subunit protein uS14.